A 210-amino-acid chain; its full sequence is Holliday junction branch migration complex subunit RuvA (210 aa).

Positions 1 to 64 are domain I; it reads MIGLIEGRVC…EDAQLLYGFL (64 aa). Residues 65–143 are domain II; that stretch reads HPTERDVFRQ…HIQSDMSLLT (79 aa). The flexible linker stretch occupies residues 144–154; the sequence is EVEQQIGIAAN. The interval 155 to 210 is domain III; it reads SEGVILAEVESALISLGYRDKEAQQAIKAARETDAGQQLVDTQSLLKLTLKQLSNF.

This sequence belongs to the RuvA family. As to quaternary structure, homotetramer. Forms an RuvA(8)-RuvB(12)-Holliday junction (HJ) complex. HJ DNA is sandwiched between 2 RuvA tetramers; dsDNA enters through RuvA and exits via RuvB. An RuvB hexamer assembles on each DNA strand where it exits the tetramer. Each RuvB hexamer is contacted by two RuvA subunits (via domain III) on 2 adjacent RuvB subunits; this complex drives branch migration. In the full resolvosome a probable DNA-RuvA(4)-RuvB(12)-RuvC(2) complex forms which resolves the HJ.

Its subcellular location is the cytoplasm. In terms of biological role, the RuvA-RuvB-RuvC complex processes Holliday junction (HJ) DNA during genetic recombination and DNA repair, while the RuvA-RuvB complex plays an important role in the rescue of blocked DNA replication forks via replication fork reversal (RFR). RuvA specifically binds to HJ cruciform DNA, conferring on it an open structure. The RuvB hexamer acts as an ATP-dependent pump, pulling dsDNA into and through the RuvAB complex. HJ branch migration allows RuvC to scan DNA until it finds its consensus sequence, where it cleaves and resolves the cruciform DNA. The polypeptide is Holliday junction branch migration complex subunit RuvA (Psychrobacter sp. (strain PRwf-1)).